The chain runs to 179 residues: Inner membrane-spanning protein YciB (179 aa).

Transmembrane regions (helical) follow at residues 22–42 (IYAATSALIVATAIVLIYSWV), 50–70 (MALITFVLVAVFGGLTLFFHN), 76–96 (WKVTVIYALFAGALLISQWVM), 121–141 (LAWALFFIACGLANIYIAFWL), and 149–169 (FKVFGLTALTLIFTLLSGVYI).

The protein belongs to the YciB family.

The protein resides in the cell inner membrane. In terms of biological role, plays a role in cell envelope biogenesis, maintenance of cell envelope integrity and membrane homeostasis. The protein is Inner membrane-spanning protein YciB of Salmonella agona (strain SL483).